Reading from the N-terminus, the 434-residue chain is Trigger factor (434 aa).

The 86-residue stretch at 161-246 (EDRATLDFTG…LKKVEVRELP (86 aa)) folds into the PPIase FKBP-type domain.

The protein belongs to the FKBP-type PPIase family. Tig subfamily.

The protein resides in the cytoplasm. The enzyme catalyses [protein]-peptidylproline (omega=180) = [protein]-peptidylproline (omega=0). Involved in protein export. Acts as a chaperone by maintaining the newly synthesized protein in an open conformation. Functions as a peptidyl-prolyl cis-trans isomerase. The polypeptide is Trigger factor (Yersinia pseudotuberculosis serotype O:1b (strain IP 31758)).